The chain runs to 353 residues: Photosystem II D2 protein (353 aa).

N-acetylthreonine is present on threonine 2. Residue threonine 2 is modified to Phosphothreonine. A helical transmembrane segment spans residues cysteine 41–threonine 61. Chlorophyll a is bound at residue histidine 118. Residues glycine 125–proline 141 traverse the membrane as a helical segment. Glutamine 130 and asparagine 143 together coordinate pheophytin a. Residues valine 153–serine 166 traverse the membrane as a helical segment. Histidine 198 contacts chlorophyll a. Residues alanine 208–aspartate 228 form a helical membrane-spanning segment. The a plastoquinone site is built by histidine 215 and phenylalanine 262. Histidine 215 serves as a coordination point for Fe cation. Histidine 269 serves as a coordination point for Fe cation. A helical membrane pass occupies residues glycine 279–arginine 295.

The protein belongs to the reaction center PufL/M/PsbA/D family. As to quaternary structure, PSII is composed of 1 copy each of membrane proteins PsbA, PsbB, PsbC, PsbD, PsbE, PsbF, PsbH, PsbI, PsbJ, PsbK, PsbL, PsbM, PsbT, PsbX, PsbY, PsbZ, Psb30/Ycf12, at least 3 peripheral proteins of the oxygen-evolving complex and a large number of cofactors. It forms dimeric complexes. The D1/D2 heterodimer binds P680, chlorophylls that are the primary electron donor of PSII, and subsequent electron acceptors. It shares a non-heme iron and each subunit binds pheophytin, quinone, additional chlorophylls, carotenoids and lipids. There is also a Cl(-1) ion associated with D1 and D2, which is required for oxygen evolution. The PSII complex binds additional chlorophylls, carotenoids and specific lipids. is required as a cofactor.

The protein resides in the plastid. It is found in the chloroplast thylakoid membrane. It catalyses the reaction 2 a plastoquinone + 4 hnu + 2 H2O = 2 a plastoquinol + O2. In terms of biological role, photosystem II (PSII) is a light-driven water:plastoquinone oxidoreductase that uses light energy to abstract electrons from H(2)O, generating O(2) and a proton gradient subsequently used for ATP formation. It consists of a core antenna complex that captures photons, and an electron transfer chain that converts photonic excitation into a charge separation. The D1/D2 (PsbA/PsbD) reaction center heterodimer binds P680, the primary electron donor of PSII as well as several subsequent electron acceptors. D2 is needed for assembly of a stable PSII complex. This Coffea arabica (Arabian coffee) protein is Photosystem II D2 protein.